We begin with the raw amino-acid sequence, 429 residues long: Adenylosuccinate synthetase (429 aa).

GTP is bound by residues 12 to 18 and 40 to 42; these read GDEGKGK and GHT. Asp-13 (proton acceptor) is an active-site residue. Residues Asp-13 and Gly-40 each coordinate Mg(2+). IMP is bound by residues 13–16, 38–41, Thr-128, Arg-142, Gln-223, Thr-238, and Arg-302; these read DEGK and NAGH. The Proton donor role is filled by His-41. Substrate is bound at residue 298-304; it reads VNTGRKR. GTP contacts are provided by residues Arg-304, 330-332, and 412-414; these read KLD and GVG.

Belongs to the adenylosuccinate synthetase family. As to quaternary structure, homodimer. It depends on Mg(2+) as a cofactor.

It localises to the cytoplasm. It catalyses the reaction IMP + L-aspartate + GTP = N(6)-(1,2-dicarboxyethyl)-AMP + GDP + phosphate + 2 H(+). It participates in purine metabolism; AMP biosynthesis via de novo pathway; AMP from IMP: step 1/2. In terms of biological role, plays an important role in the de novo pathway of purine nucleotide biosynthesis. Catalyzes the first committed step in the biosynthesis of AMP from IMP. This is Adenylosuccinate synthetase from Corynebacterium jeikeium (strain K411).